We begin with the raw amino-acid sequence, 44 residues long: Endochitinase 1 (44 aa).

The protein belongs to the glycosyl hydrolase 19 family. Chitinase class I subfamily.

It carries out the reaction Random endo-hydrolysis of N-acetyl-beta-D-glucosaminide (1-&gt;4)-beta-linkages in chitin and chitodextrins.. Defense against chitin-containing fungal pathogens. The protein is Endochitinase 1 of Capsicum chinense (Scotch bonnet).